The primary structure comprises 443 residues: Na(+)-translocating ferredoxin:NAD(+) oxidoreductase complex subunit C (443 aa).

4Fe-4S ferredoxin-type domains are found at residues 359–391 (ESAK…IAEY) and 398–428 (DKCE…VSSI). Residues cysteine 369, cysteine 372, cysteine 375, cysteine 379, cysteine 408, cysteine 411, cysteine 414, and cysteine 418 each contribute to the [4Fe-4S] cluster site.

Belongs to the 4Fe4S bacterial-type ferredoxin family. RnfC subfamily. The complex is composed of six subunits: RnfA, RnfB, RnfC, RnfD, RnfE and RnfG. The cofactor is [4Fe-4S] cluster.

Its subcellular location is the cell membrane. It catalyses the reaction 2 reduced [2Fe-2S]-[ferredoxin] + Na(+)(in) + NAD(+) + H(+) = 2 oxidized [2Fe-2S]-[ferredoxin] + Na(+)(out) + NADH. Part of a membrane-bound complex that couples electron transfer with translocation of ions across the membrane. Couples electron transfer from reduced ferredoxin to NAD(+) with electrogenic movement of Na(+) out of the cell. Involved in caffeate respiration. In Acetobacterium woodii (strain ATCC 29683 / DSM 1030 / JCM 2381 / KCTC 1655 / WB1), this protein is Na(+)-translocating ferredoxin:NAD(+) oxidoreductase complex subunit C.